The primary structure comprises 125 residues: Large ribosomal subunit protein uL22c (125 aa).

It belongs to the universal ribosomal protein uL22 family. As to quaternary structure, part of the 50S ribosomal subunit.

It is found in the plastid. It localises to the chloroplast. Its function is as follows. This protein binds specifically to 23S rRNA. Functionally, the globular domain of the protein is located near the polypeptide exit tunnel on the outside of the subunit, while an extended beta-hairpin is found that lines the wall of the exit tunnel in the center of the 70S ribosome. In Huperzia lucidula (Shining clubmoss), this protein is Large ribosomal subunit protein uL22c (rpl22).